We begin with the raw amino-acid sequence, 615 residues long: Ectoine/glycine betaine/proline transporter EctP (615 aa).

12 helical membrane passes run 24 to 44, 62 to 82, 102 to 122, 156 to 176, 207 to 227, 240 to 260, 275 to 295, 329 to 349, 360 to 380, 417 to 437, 463 to 483, and 489 to 509; these read FIFS…IALG, LGWM…GIFA, IVWF…FWGV, FGIH…YFIY, LAIV…VLQI, VSWV…ISVA, IAMA…LTLL, WTVF…MFVA, FIGG…SIFG, LTGI…ITSI, WACT…SSGI, and VVII…FSLL. 2 disordered regions span residues 524-562 and 589-615; these read TRQW…LEHD and PEEA…EYDI. Composition is skewed to basic and acidic residues over residues 526–540 and 600–615; these read QWEK…EEHS and KIVE…EYDI.

Belongs to the BCCT transporter (TC 2.A.15) family.

It is found in the cell membrane. Functionally, involved in the uptake of osmoprotectants. Can transport ectoine, proline and glycine betaine. Na(+) is probably the coupling ion. The polypeptide is Ectoine/glycine betaine/proline transporter EctP (Corynebacterium glutamicum (strain ATCC 13032 / DSM 20300 / JCM 1318 / BCRC 11384 / CCUG 27702 / LMG 3730 / NBRC 12168 / NCIMB 10025 / NRRL B-2784 / 534)).